Consider the following 324-residue polypeptide: Heat-inducible transcription repressor HrcA (324 aa).

It belongs to the HrcA family.

Its function is as follows. Negative regulator of class I heat shock genes (grpE-dnaK-dnaJ and groELS operons). Prevents heat-shock induction of these operons. In Synechococcus sp. (strain CC9902), this protein is Heat-inducible transcription repressor HrcA.